A 284-amino-acid chain; its full sequence is Putative ABC transporter ATP-binding protein PH1815 (284 aa).

The ABC transporter domain maps to 4–244 (IEVEDVSFRY…VEFLRTIGVK (241 aa)). 38-45 (GPSGSGKS) lines the ATP pocket.

This sequence belongs to the ABC transporter superfamily.

It is found in the cell membrane. Probably part of an ABC transporter complex. Responsible for energy coupling to the transport system. The polypeptide is Putative ABC transporter ATP-binding protein PH1815 (Pyrococcus horikoshii (strain ATCC 700860 / DSM 12428 / JCM 9974 / NBRC 100139 / OT-3)).